A 558-amino-acid polypeptide reads, in one-letter code: Dihydroxy-acid dehydratase (558 aa).

Asp-78 is a binding site for Mg(2+). Cys-119 serves as a coordination point for [2Fe-2S] cluster. Residues Asp-120 and Lys-121 each coordinate Mg(2+). At Lys-121 the chain carries N6-carboxylysine. Cys-192 provides a ligand contact to [2Fe-2S] cluster. Glu-445 is a Mg(2+) binding site. Ser-471 serves as the catalytic Proton acceptor.

The protein belongs to the IlvD/Edd family. Homodimer. Requires [2Fe-2S] cluster as cofactor. Mg(2+) serves as cofactor.

It catalyses the reaction (2R)-2,3-dihydroxy-3-methylbutanoate = 3-methyl-2-oxobutanoate + H2O. The catalysed reaction is (2R,3R)-2,3-dihydroxy-3-methylpentanoate = (S)-3-methyl-2-oxopentanoate + H2O. Its pathway is amino-acid biosynthesis; L-isoleucine biosynthesis; L-isoleucine from 2-oxobutanoate: step 3/4. The protein operates within amino-acid biosynthesis; L-valine biosynthesis; L-valine from pyruvate: step 3/4. In terms of biological role, functions in the biosynthesis of branched-chain amino acids. Catalyzes the dehydration of (2R,3R)-2,3-dihydroxy-3-methylpentanoate (2,3-dihydroxy-3-methylvalerate) into 2-oxo-3-methylpentanoate (2-oxo-3-methylvalerate) and of (2R)-2,3-dihydroxy-3-methylbutanoate (2,3-dihydroxyisovalerate) into 2-oxo-3-methylbutanoate (2-oxoisovalerate), the penultimate precursor to L-isoleucine and L-valine, respectively. The polypeptide is Dihydroxy-acid dehydratase (Akkermansia muciniphila (strain ATCC BAA-835 / DSM 22959 / JCM 33894 / BCRC 81048 / CCUG 64013 / CIP 107961 / Muc)).